A 484-amino-acid polypeptide reads, in one-letter code: tRNA sulfurtransferase (484 aa).

Residues 63–167 (REMIERLTCT…LDRLFVIHRQ (105 aa)) enclose the THUMP domain. ATP contacts are provided by residues 185–186 (LM), Lys-267, Gly-289, and Gln-298. Cys-346 and Cys-457 are joined by a disulfide. The Rhodanese domain occupies 405 to 483 (VLPGQIVIDI…GHTNVRVYRP (79 aa)). The active-site Cysteine persulfide intermediate is the Cys-457.

This sequence belongs to the ThiI family.

It localises to the cytoplasm. It carries out the reaction [ThiI sulfur-carrier protein]-S-sulfanyl-L-cysteine + a uridine in tRNA + 2 reduced [2Fe-2S]-[ferredoxin] + ATP + H(+) = [ThiI sulfur-carrier protein]-L-cysteine + a 4-thiouridine in tRNA + 2 oxidized [2Fe-2S]-[ferredoxin] + AMP + diphosphate. It catalyses the reaction [ThiS sulfur-carrier protein]-C-terminal Gly-Gly-AMP + S-sulfanyl-L-cysteinyl-[cysteine desulfurase] + AH2 = [ThiS sulfur-carrier protein]-C-terminal-Gly-aminoethanethioate + L-cysteinyl-[cysteine desulfurase] + A + AMP + 2 H(+). It functions in the pathway cofactor biosynthesis; thiamine diphosphate biosynthesis. Its function is as follows. Catalyzes the ATP-dependent transfer of a sulfur to tRNA to produce 4-thiouridine in position 8 of tRNAs, which functions as a near-UV photosensor. Also catalyzes the transfer of sulfur to the sulfur carrier protein ThiS, forming ThiS-thiocarboxylate. This is a step in the synthesis of thiazole, in the thiamine biosynthesis pathway. The sulfur is donated as persulfide by IscS. The sequence is that of tRNA sulfurtransferase from Pseudomonas aeruginosa (strain LESB58).